A 343-amino-acid polypeptide reads, in one-letter code: N(4)-bis(aminopropyl)spermidine synthase (343 aa).

It belongs to the branched-chain polyamine synthase family.

It is found in the cytoplasm. The enzyme catalyses 2 S-adenosyl 3-(methylsulfanyl)propylamine + spermidine = N(4)-bis(aminopropyl)spermidine + 2 S-methyl-5'-thioadenosine + 2 H(+). It functions in the pathway amine and polyamine biosynthesis. In terms of biological role, involved in the biosynthesis of branched-chain polyamines, which support the growth of thermophiles under high-temperature conditions. Catalyzes the sequential condensation of spermidine with the aminopropyl groups of decarboxylated S-adenosylmethionines to produce N(4)-bis(aminopropyl)spermidine via N(4)-aminopropylspermidine. The protein is N(4)-bis(aminopropyl)spermidine synthase of Thermus thermophilus.